Reading from the N-terminus, the 299-residue chain is Protoheme IX farnesyltransferase (299 aa).

A run of 8 helical transmembrane segments spans residues 25–45 (IVSL…PDLA), 51–71 (LFGT…NHLI), 97–117 (ALAF…FLVN), 119–139 (LTAW…TAFL), 147–167 (IVLG…AVTG), 173–193 (AFLL…ALAL), 225–245 (FLLF…LLYL), and 275–295 (FGYS…DHYL).

Belongs to the UbiA prenyltransferase family. Protoheme IX farnesyltransferase subfamily.

Its subcellular location is the cell inner membrane. It carries out the reaction heme b + (2E,6E)-farnesyl diphosphate + H2O = Fe(II)-heme o + diphosphate. The protein operates within porphyrin-containing compound metabolism; heme O biosynthesis; heme O from protoheme: step 1/1. Its function is as follows. Converts heme B (protoheme IX) to heme O by substitution of the vinyl group on carbon 2 of heme B porphyrin ring with a hydroxyethyl farnesyl side group. This is Protoheme IX farnesyltransferase from Nitrosococcus oceani (strain ATCC 19707 / BCRC 17464 / JCM 30415 / NCIMB 11848 / C-107).